A 222-amino-acid polypeptide reads, in one-letter code: Glutathione S-transferase A2 (222 aa).

Ala2 bears the N-acetylalanine mark. The GST N-terminal domain occupies 3–83 (GKPVLHYFNA…YIATKYDLYG (81 aa)). Lys4 carries the N6-succinyllysine modification. Glutathione-binding positions include Tyr9, Lys45, 54–55 (QV), and 67–68 (QT). Residues 85–208 (DMKERALIDM…HPGSQRKPPL (124 aa)) enclose the GST C-terminal domain.

Belongs to the GST superfamily. Alpha family. Homodimer. Heterodimer of GSTA1 and GSTA2. Expressed in the kidney.

It carries out the reaction RX + glutathione = an S-substituted glutathione + a halide anion + H(+). Functionally, catalyzes the conjugation of glutathione to a large variety of electrophilic compounds. In Mus musculus (Mouse), this protein is Glutathione S-transferase A2 (Gsta2).